We begin with the raw amino-acid sequence, 142 residues long: Protein spalt-accessory (142 aa).

The N-terminal stretch at 1-16 (MKLLIALFALVTAVNA) is a signal peptide. The segment at 75 to 142 (GFAGQGSPNQ…HHEHHGHHRH (68 aa)) is disordered. A compositionally biased stretch (basic and acidic residues) spans 107–124 (GHFHENPHEYPEHHGDHH). Positions 125–142 (REHHEHHGHHEHHGHHRH) are enriched in basic residues.

The protein localises to the secreted. Likely to be involved in the establishment of the head. The chain is Protein spalt-accessory (sala) from Drosophila melanogaster (Fruit fly).